The chain runs to 167 residues: Ureidoglycolate lyase (167 aa).

This sequence belongs to the ureidoglycolate lyase family. In terms of assembly, homodimer. Ni(2+) is required as a cofactor.

The enzyme catalyses (S)-ureidoglycolate = urea + glyoxylate. The protein operates within nitrogen metabolism; (S)-allantoin degradation. Its function is as follows. Catalyzes the catabolism of the allantoin degradation intermediate (S)-ureidoglycolate, generating urea and glyoxylate. Involved in the utilization of allantoin as nitrogen source. This chain is Ureidoglycolate lyase, found in Pseudomonas fluorescens (strain Pf0-1).